The sequence spans 1462 residues: Gag-Pro-Pol polyprotein (1462 aa).

The N-myristoyl glycine; by host moiety is linked to residue Gly-2. The tract at residues 93 to 143 (QIPSHPAPPPPSSPTHDPPDSDPQIPPPYVEPTAPQVLPVMHPHGVPPTHR) is disordered. A Phosphoserine; by host MAPK1 modification is found at Ser-105. A PPXY motif motif is present at residues 118–121 (PPPY). Positions 124 to 127 (PTAP) match the PTAP/PSAP motif motif. 2 CCHC-type zinc fingers span residues 355 to 372 (QPCFRCGKAGHWSRDCAQ) and 378 to 395 (GPCPLCQDPTHWKRDCPR). Positions 476–554 (IEALLDTGAD…NNWAIIGRDA (79 aa)) constitute a Peptidase A2 domain. The For protease activity; shared with dimeric partner role is filled by Asp-481. The region spanning 614-804 (LEAGHIEPYT…GTIKFLGQII (191 aa)) is the Reverse transcriptase domain. Mg(2+)-binding residues include Asp-680, Asp-755, Asp-756, Asp-1040, Glu-1074, Asp-1096, Asp-1157, Asp-1230, and Asp-1287. The RNase H type-1 domain maps to 1031 to 1165 (INTAPCLFSD…TDALLITPIL (135 aa)). The 170-residue stretch at 1219-1388 (RGLLPNHIWQ…QPIPETHSLI (170 aa)) folds into the Integrase catalytic domain. Positions 1393–1443 (HWYYFKLPGLNSRQWKGPQEALQEAAGAALIPVSANSAQWIPWRLLKQAAC) form a DNA-binding region, integrase-type.

Homodimer; the homodimers are part of the immature particles. Interacts with human TSG101 and NEDD4; these interactions are essential for budding and release of viral particles. As to quaternary structure, homodimer; further assembles as homohexamers. The cofactor is Mg(2+). Post-translationally, phosphorylation of the matrix protein p19 by MAPK1 seems to play a role in budding. Myristoylated. Myristoylation of the matrix (MA) domain mediates the transport and binding of Gag polyproteins to the host plasma membrane and is required for the assembly of viral particles. In terms of processing, specific enzymatic cleavages by the viral protease yield mature proteins. The polyprotein is cleaved during and after budding, this process is termed maturation. The protease is autoproteolytically processed at its N- and C-termini.

Its subcellular location is the virion. It carries out the reaction Endonucleolytic cleavage to 5'-phosphomonoester.. The enzyme catalyses DNA(n) + a 2'-deoxyribonucleoside 5'-triphosphate = DNA(n+1) + diphosphate. Functionally, the matrix domain targets Gag, Gag-Pro and Gag-Pro-Pol polyproteins to the plasma membrane via a multipartite membrane binding signal, that includes its myristoylated N-terminus. Matrix protein. In terms of biological role, forms the spherical core of the virus that encapsulates the genomic RNA-nucleocapsid complex. Its function is as follows. Binds strongly to viral nucleic acids and promote their aggregation. Also destabilizes the nucleic acids duplexes via highly structured zinc-binding motifs. Functionally, the aspartyl protease mediates proteolytic cleavages of Gag and Gag-Pol polyproteins during or shortly after the release of the virion from the plasma membrane. Cleavages take place as an ordered, step-wise cascade to yield mature proteins. This process is called maturation. Displays maximal activity during the budding process just prior to particle release from the cell (Potential). Cleaves the translation initiation factor eIF4G leading to the inhibition of host cap-dependent translation. RT is a multifunctional enzyme that converts the viral RNA genome into dsDNA in the cytoplasm, shortly after virus entry into the cell. This enzyme displays a DNA polymerase activity that can copy either DNA or RNA templates, and a ribonuclease H (RNase H) activity that cleaves the RNA strand of RNA-DNA heteroduplexes in a partially processive 3' to 5'-endonucleasic mode. Conversion of viral genomic RNA into dsDNA requires many steps. A tRNA-Pro binds to the primer-binding site (PBS) situated at the 5'-end of the viral RNA. RT uses the 3' end of the tRNA primer to perform a short round of RNA-dependent minus-strand DNA synthesis. The reading proceeds through the U5 region and ends after the repeated (R) region which is present at both ends of viral RNA. The portion of the RNA-DNA heteroduplex is digested by the RNase H, resulting in a ssDNA product attached to the tRNA primer. This ssDNA/tRNA hybridizes with the identical R region situated at the 3' end of viral RNA. This template exchange, known as minus-strand DNA strong stop transfer, can be either intra- or intermolecular. RT uses the 3' end of this newly synthesized short ssDNA to perform the RNA-dependent minus-strand DNA synthesis of the whole template. RNase H digests the RNA template except for a polypurine tract (PPT) situated at the 5' end of the genome. It is not clear if both polymerase and RNase H activities are simultaneous. RNase H probably can proceed both in a polymerase-dependent (RNA cut into small fragments by the same RT performing DNA synthesis) and a polymerase-independent mode (cleavage of remaining RNA fragments by free RTs). Secondly, RT performs DNA-directed plus-strand DNA synthesis using the PPT that has not been removed by RNase H as primer. PPT and tRNA primers are then removed by RNase H. The 3' and 5' ssDNA PBS regions hybridize to form a circular dsDNA intermediate. Strand displacement synthesis by RT to the PBS and PPT ends produces a blunt ended, linear dsDNA copy of the viral genome that includes long terminal repeats (LTRs) at both ends. In terms of biological role, catalyzes viral DNA integration into the host chromosome, by performing a series of DNA cutting and joining reactions. This Homo sapiens (Human) protein is Gag-Pro-Pol polyprotein (gag-pro-pol).